Reading from the N-terminus, the 303-residue chain is MYIQILGSAAGGGFPQWNCNCVNCKGYRDGTLRASARTQSSIALSDDGEHWILCNASPDIRAQLQAFAPMQPARALRDTGINAIVLLDSQIDHTTGLLSLREGCPHQVWCTDMVHQDLTTGFPLFNMLSHWNGGLVWNRIELEGSFVIEACPNLRFTPFPLRSAAPPYSPHRFDPHPGDNLGLLVEDTRTGGKLFYAPGLGQVDDKLLQMMGGADCLLVDGTLWEDDEMQRRGVGTRTGREMGHLAQNGPGGMLEVLDGFPRQRKVLIHINNTNPILDEDSPERAEVVRRGVEVAFDGMSLKL.

This sequence belongs to the PqqB family.

It functions in the pathway cofactor biosynthesis; pyrroloquinoline quinone biosynthesis. May be involved in the transport of PQQ or its precursor to the periplasm. The protein is Coenzyme PQQ synthesis protein B of Pseudomonas entomophila (strain L48).